Here is a 422-residue protein sequence, read N- to C-terminus: UDP-N-acetylglucosamine 1-carboxyvinyltransferase (422 aa).

22 to 23 provides a ligand contact to phosphoenolpyruvate; the sequence is KN. UDP-N-acetyl-alpha-D-glucosamine is bound at residue R93. The active-site Proton donor is the C117. C117 carries the post-translational modification 2-(S-cysteinyl)pyruvic acid O-phosphothioketal. Residues 122-126, D308, and L330 each bind UDP-N-acetyl-alpha-D-glucosamine; that span reads RPVDL.

The protein belongs to the EPSP synthase family. MurA subfamily.

The protein resides in the cytoplasm. It catalyses the reaction phosphoenolpyruvate + UDP-N-acetyl-alpha-D-glucosamine = UDP-N-acetyl-3-O-(1-carboxyvinyl)-alpha-D-glucosamine + phosphate. The protein operates within cell wall biogenesis; peptidoglycan biosynthesis. Cell wall formation. Adds enolpyruvyl to UDP-N-acetylglucosamine. This chain is UDP-N-acetylglucosamine 1-carboxyvinyltransferase, found in Helicobacter pylori (strain J99 / ATCC 700824) (Campylobacter pylori J99).